The sequence spans 86 residues: Large ribosomal subunit protein bL31B (86 aa).

Belongs to the bacterial ribosomal protein bL31 family. Type B subfamily. Part of the 50S ribosomal subunit.

The polypeptide is Large ribosomal subunit protein bL31B (Cupriavidus necator (strain ATCC 17699 / DSM 428 / KCTC 22496 / NCIMB 10442 / H16 / Stanier 337) (Ralstonia eutropha)).